Here is a 202-residue protein sequence, read N- to C-terminus: FMN-dependent NADH:quinone oxidoreductase (202 aa).

FMN is bound by residues S10 and 95-98; that span reads MYNF.

This sequence belongs to the azoreductase type 1 family. As to quaternary structure, homodimer. Requires FMN as cofactor.

It carries out the reaction 2 a quinone + NADH + H(+) = 2 a 1,4-benzosemiquinone + NAD(+). It catalyses the reaction N,N-dimethyl-1,4-phenylenediamine + anthranilate + 2 NAD(+) = 2-(4-dimethylaminophenyl)diazenylbenzoate + 2 NADH + 2 H(+). In terms of biological role, quinone reductase that provides resistance to thiol-specific stress caused by electrophilic quinones. Also exhibits azoreductase activity. Catalyzes the reductive cleavage of the azo bond in aromatic azo compounds to the corresponding amines. This is FMN-dependent NADH:quinone oxidoreductase from Alkalilimnicola ehrlichii (strain ATCC BAA-1101 / DSM 17681 / MLHE-1).